Reading from the N-terminus, the 363-residue chain is Chorismate synthase (363 aa).

Residues 44–63 (DLDRRKPGTSRHTTQRQEPD) form a disordered region. 2 residues coordinate NADP(+): Arg48 and Arg54. FMN is bound by residues 125 to 127 (RSS), 237 to 238 (NA), Gly277, 292 to 296 (KATSS), and Arg318.

Belongs to the chorismate synthase family. Homotetramer. FMNH2 is required as a cofactor.

The catalysed reaction is 5-O-(1-carboxyvinyl)-3-phosphoshikimate = chorismate + phosphate. It functions in the pathway metabolic intermediate biosynthesis; chorismate biosynthesis; chorismate from D-erythrose 4-phosphate and phosphoenolpyruvate: step 7/7. Functionally, catalyzes the anti-1,4-elimination of the C-3 phosphate and the C-6 proR hydrogen from 5-enolpyruvylshikimate-3-phosphate (EPSP) to yield chorismate, which is the branch point compound that serves as the starting substrate for the three terminal pathways of aromatic amino acid biosynthesis. This reaction introduces a second double bond into the aromatic ring system. This chain is Chorismate synthase, found in Pseudomonas fluorescens (strain SBW25).